Consider the following 235-residue polypeptide: Protein fmp52-1, mitochondrial (235 aa).

The transit peptide at 1–36 directs the protein to the mitochondrion; the sequence is MANTALIGCTGMVGSFILNNLLAHPSVARVDTISRR.

This sequence belongs to the FMP52 family.

Its subcellular location is the mitochondrion outer membrane. The polypeptide is Protein fmp52-1, mitochondrial (fmp521) (Aspergillus oryzae (strain ATCC 42149 / RIB 40) (Yellow koji mold)).